The sequence spans 476 residues: uncharacterized protein (476 aa).

A signal peptide spans 1-24; that stretch reads MIRKSATGVIVALAVIWGGGTWYT.

It to E.coli YdgA and H.influenzae HI_1236.

This is an uncharacterized protein from Escherichia coli (strain K12).